A 950-amino-acid polypeptide reads, in one-letter code: Protocadherin alpha-6 (950 aa).

The first 29 residues, 1–29 (MVFTPEDRLGKQCLLLPLLLLAAWKVGSG), serve as a signal peptide directing secretion. Over 30 to 697 (QLHYSVPEEA…GPEAALVDVN (668 aa)) the chain is Extracellular. Cadherin domains lie at 34-133 (SVPE…PPLF), 157-242 (ASDA…APTF), 243-350 (EQSE…VPEI), 351-455 (ALTS…APAF), 456-565 (AQPE…APAL), and 581-678 (VPRS…APKA). N-linked (GlcNAc...) asparagine glycans are attached at residues Asn257, Asn265, Asn386, and Asn548. A helical transmembrane segment spans residues 698 to 718 (VYLIIAICAVSSLLVLTLLLY). Residues 719-950 (TALRCSAPPT…GNSTTDNSDQ (232 aa)) are Cytoplasmic-facing. PXXP repeat units lie at residues 799–802 (PRQP), 832–835 (PGGP), 873–876 (PGNP), and 891–894 (PGSP). The interval 799–894 (PRQPNPDWRY…PDKFIIPGSP (96 aa)) is 4 X 4 AA repeats of P-X-X-P. Residues 830–950 (AGPGGPDQQW…GNSTTDNSDQ (121 aa)) are disordered. Positions 909-923 (DKSDFITFGKKEETK) are enriched in basic and acidic residues.

Its subcellular location is the cell membrane. The protein localises to the secreted. Potential calcium-dependent cell-adhesion protein. May be involved in the establishment and maintenance of specific neuronal connections in the brain. This is Protocadherin alpha-6 (PCDHA6) from Homo sapiens (Human).